A 287-amino-acid chain; its full sequence is Ribosomal RNA small subunit methyltransferase I (287 aa).

Belongs to the methyltransferase superfamily. RsmI family.

Its subcellular location is the cytoplasm. The catalysed reaction is cytidine(1402) in 16S rRNA + S-adenosyl-L-methionine = 2'-O-methylcytidine(1402) in 16S rRNA + S-adenosyl-L-homocysteine + H(+). Catalyzes the 2'-O-methylation of the ribose of cytidine 1402 (C1402) in 16S rRNA. The protein is Ribosomal RNA small subunit methyltransferase I of Streptococcus pyogenes serotype M1.